Consider the following 247-residue polypeptide: Pulmonary surfactant-associated protein A (247 aa).

Positions 1–15 are cleaved as a signal peptide; that stretch reads MLLLSLALTLISAPA. The Collagen-like domain occupies 27–99; that stretch reads GSPGIPGTPG…PGERGPPGLP (73 aa). 4-hydroxyproline occurs at positions 29, 32, 35, 41, 53, 56, 62, 66, and 69. Residues 30–100 form a disordered region; the sequence is GIPGTPGSHG…GERGPPGLPA (71 aa). The segment covering 41 to 50 has biased composition (basic and acidic residues); sequence PGRDGRDGVK. Over residues 53-64 the composition is skewed to pro residues; that stretch reads PGPPGPMGPPGG. A compositionally biased stretch (basic and acidic residues) spans 83 to 92; that stretch reads ERGDKGEPGE. In terms of domain architecture, C-type lectin spans 132–247; that stretch reads AVGEKIFSTN…LQYRLVICEF (116 aa). 2 disulfides stabilise this stretch: cysteine 154/cysteine 245 and cysteine 223/cysteine 237. An N-linked (GlcNAc...) asparagine glycan is attached at asparagine 206. Ca(2+) is bound by residues glutamate 214, arginine 216, asparagine 233, and aspartate 234.

Belongs to the SFTPA family. In terms of assembly, oligomeric complex of 6 set of homotrimers.

The protein localises to the secreted. Its subcellular location is the extracellular space. The protein resides in the extracellular matrix. It localises to the surface film. In presence of calcium ions, it binds to surfactant phospholipids and contributes to lower the surface tension at the air-liquid interface in the alveoli of the mammalian lung and is essential for normal respiration. Enhances the expression of MYO18A/SP-R210 on alveolar macrophages. This Oryctolagus cuniculus (Rabbit) protein is Pulmonary surfactant-associated protein A (SFTPA1).